Consider the following 652-residue polypeptide: Probable endo-1,3(4)-beta-glucanase AFUB_029980 (652 aa).

The signal sequence occupies residues 1–21 (MAPSSLLLSVGSLITSSLVSA). The region spanning 36 to 289 (ESWQGESFIN…WAGNVFAEST (254 aa)) is the GH16 domain. An N-linked (GlcNAc...) asparagine glycan is attached at N64. E145 serves as the catalytic Nucleophile. The active-site Proton donor is E150. 2 N-linked (GlcNAc...) asparagine glycosylation sites follow: N200 and N208. The segment at 379–423 (NTVATSAADHATPSSAETTTVPAATGAPSVSATEGGDSELESTST) is disordered. Residues 390–410 (TPSSAETTTVPAATGAPSVSA) show a composition bias toward polar residues. An N-linked (GlcNAc...) asparagine glycan is attached at N453. The disordered stretch occupies residues 509 to 551 (SEIPTAPPEPVSQAVSTGSFDDSDTAQGDSEEQGSIASASVAP). The span at 529–540 (DDSDTAQGDSEE) shows a compositional bias: acidic residues. N630 is lipidated: GPI-anchor amidated asparagine. The propeptide at 631-652 (GANRMSVGLSGLIGVMFIAALA) is removed in mature form.

The protein belongs to the glycosyl hydrolase 16 family.

Its subcellular location is the cell membrane. The catalysed reaction is Endohydrolysis of (1-&gt;3)- or (1-&gt;4)-linkages in beta-D-glucans when the glucose residue whose reducing group is involved in the linkage to be hydrolyzed is itself substituted at C-3.. In terms of biological role, mixed-linked glucanase involved in the degradation of complex natural cellulosic substrates. The polypeptide is Probable endo-1,3(4)-beta-glucanase AFUB_029980 (Aspergillus fumigatus (strain CBS 144.89 / FGSC A1163 / CEA10) (Neosartorya fumigata)).